A 247-amino-acid polypeptide reads, in one-letter code: Large ribosomal subunit protein uL30z (247 aa).

Belongs to the universal ribosomal protein uL30 family.

The protein is Large ribosomal subunit protein uL30z (RPL7A) of Arabidopsis thaliana (Mouse-ear cress).